We begin with the raw amino-acid sequence, 176 residues long: bZIP transcription factor 8 (176 aa).

Residues 44-101 (PNTSGGSDESMSDGSKIDPKRSPKYLEKRMKNNEAAKKSRASRKHREQKNQTENELLK) form a disordered region. Low complexity predominate over residues 47–57 (SGGSDESMSDG). Over residues 58 to 80 (SKIDPKRSPKYLEKRMKNNEAAK) the composition is skewed to basic and acidic residues. The region spanning 65-128 (SPKYLEKRMK…AQMQITIRDM (64 aa)) is the bZIP domain. Residues 67–92 (KYLEKRMKNNEAAKKSRASRKHREQK) are basic motif. Residues 81-90 (KSRASRKHRE) are compositionally biased toward basic residues. Residues 91–101 (QKNQTENELLK) show a composition bias toward basic and acidic residues. Residues 100 to 107 (LKRKNAAL) are leucine-zipper.

It belongs to the bZIP family.

This chain is bZIP transcription factor 8 (zip-8), found in Caenorhabditis elegans.